A 989-amino-acid polypeptide reads, in one-letter code: Phosphoenolpyruvate carboxylase (989 aa).

Active-site residues include histidine 175 and lysine 630.

The protein belongs to the PEPCase type 1 family. It depends on Mg(2+) as a cofactor.

It catalyses the reaction oxaloacetate + phosphate = phosphoenolpyruvate + hydrogencarbonate. Forms oxaloacetate, a four-carbon dicarboxylic acid source for the tricarboxylic acid cycle. This Prochlorococcus marinus (strain MIT 9515) protein is Phosphoenolpyruvate carboxylase.